A 155-amino-acid polypeptide reads, in one-letter code: MSKITEEVETIITPILDELNFELVEVEYTKEGKDHFLRISIDKEGGVNLNDCTLASEKISEAMDENDPIPDMYYLDVASPGAERPIKKEKDYHNAIDKPVFVSLYAPIEGDKEWLGILKAVDDDTITMEVKEKAKTKQIEIPRNKIAKARHAVMI.

This sequence belongs to the RimP family.

It localises to the cytoplasm. Required for maturation of 30S ribosomal subunits. The polypeptide is Ribosome maturation factor RimP (Staphylococcus haemolyticus (strain JCSC1435)).